The chain runs to 394 residues: 12-oxophytodienoate reductase 7 (394 aa).

FMN contacts are provided by residues 35–37 (PMT) and Gln-110. 189–192 (HGAH) is a substrate binding site. The Proton donor role is filled by Tyr-194. Position 241 (Arg-241) interacts with FMN. Arg-286 lines the substrate pocket. FMN contacts are provided by residues Gly-324 and 345-346 (GR). A Microbody targeting signal motif is present at residues 392–394 (SRM).

It belongs to the NADH:flavin oxidoreductase/NADH oxidase family. Requires FMN as cofactor.

It is found in the peroxisome. It carries out the reaction (1S,2S)-OPC-8 + NADP(+) = (9S,13S,15Z)-12-oxophyto-10,15-dienoate + NADPH + H(+). Its pathway is lipid metabolism; oxylipin biosynthesis. Involved in the biosynthesis of jasmonate (JA) and perhaps in biosynthesis or metabolism of other oxylipin signaling moleclules. In vitro, reduces cis(+)-12-oxophytodienoic acid (cis(+)-OPDA) and cis(-)-OPDA to cis(+)-OPC-8:0 and cis(-)-OPC-8:0, respectively. May be required for the spatial and temporal regulation of JA levels during dehiscence of anthers, promoting the stomium degeneration program. Involved in carbohydrate transport underlying normal lodicule function during anthesis. The polypeptide is 12-oxophytodienoate reductase 7 (Oryza sativa subsp. japonica (Rice)).